Reading from the N-terminus, the 144-residue chain is Putative pre-16S rRNA nuclease (144 aa).

It belongs to the YqgF nuclease family.

It localises to the cytoplasm. Its function is as follows. Could be a nuclease involved in processing of the 5'-end of pre-16S rRNA. This is Putative pre-16S rRNA nuclease from Blochmanniella pennsylvanica (strain BPEN).